We begin with the raw amino-acid sequence, 623 residues long: Kelch-like protein diablo (623 aa).

The tract at residues 1 to 54 (MGDLPGSGSTAQPRDAAVTGTGGNSTAGGGSSVGSTAVDRPPSPARLSHTSEKH) is disordered. A Phosphothreonine modification is found at Thr-19. Residues 20-32 (GTGGNSTAGGGSS) show a composition bias toward gly residues. In terms of domain architecture, BTB spans 72–139 (CDVVLNVGGR…CYTAHIIVEE (68 aa)). A BACK domain is found at 174-276 (CLGIRAFADT…SPKFLVGTVG (103 aa)). Kelch repeat units follow at residues 323–369 (VLFA…VLND), 371–417 (LYAV…VLDE), 418–464 (FLYA…VLGG), 466–511 (LYAI…VFNN), 513–558 (IYAV…VVNG), and 559–605 (QLYA…VMRA).

The protein operates within protein modification; protein ubiquitination. Functionally, probable substrate-specific adapter of an E3 ubiquitin-protein ligase complex which mediates the ubiquitination and subsequent proteasomal degradation of target proteins. May have a role in synapse differentiation and growth. The chain is Kelch-like protein diablo from Drosophila simulans (Fruit fly).